Consider the following 279-residue polypeptide: Undecaprenyl-diphosphatase (279 aa).

Helical transmembrane passes span 2–22 (LFIELLKAIFFGVIEGVTEWL), 44–64 (AFMEMFNIVIQLGAIIAVIVI), 85–105 (WQLWLKVAIACIPSIIIAVPL), 113–133 (FNHMLPIAIALIVYGIAFLWI), 163–183 (VLSIIPGTSRSGATILGAIIL), 188–208 (TVAADFTFFLAIPTMFGYSGL), 225–245 (LLVLLVASLTAFAVSLYVIKL), and 255–275 (FTVFGRYRIVLGSLLIVYSVF).

It belongs to the UppP family.

It localises to the cell membrane. It carries out the reaction di-trans,octa-cis-undecaprenyl diphosphate + H2O = di-trans,octa-cis-undecaprenyl phosphate + phosphate + H(+). Catalyzes the dephosphorylation of undecaprenyl diphosphate (UPP). Confers resistance to bacitracin. The polypeptide is Undecaprenyl-diphosphatase (Streptococcus equi subsp. equi (strain 4047)).